A 568-amino-acid polypeptide reads, in one-letter code: Lipoprotein LpqB (568 aa).

An N-terminal signal peptide occupies residues 1 to 23 (MSKISTKLKALSAVLSVTTLVAG). A lipid anchor (N-palmitoyl cysteine) is attached at Cys24. Cys24 is lipidated: S-diacylglycerol cysteine.

The protein belongs to the LpqB lipoprotein family.

It localises to the cell membrane. This Corynebacterium glutamicum (strain R) protein is Lipoprotein LpqB.